The sequence spans 359 residues: Phospho-N-acetylmuramoyl-pentapeptide-transferase (359 aa).

A run of 10 helical transmembrane segments spans residues 24–44 (FRALIAVIVSFLITLVLSPIF), 72–92 (FVPSMGGLIIILSLELSSILL), 100–120 (TWIMAFTVFGFAIVGFIDDFV), 134–154 (MLGQIIVSFVSASLLYFVMHI), 170–190 (LGYFYIVFVMLILIATSNAVN), 197–217 (GLAIVPAMTTAFALGIISYVA), 234–254 (AGELAIFGMAVVGAGLGFLWF), 261–281 (MFMGDVGSLGLGAALGMLAIM), 289–309 (IIAGGVFVVEALSVIIQVSVF), and 336–356 (KIVVRIWIISILLAIFTIATL).

It belongs to the glycosyltransferase 4 family. MraY subfamily. Mg(2+) serves as cofactor.

The protein localises to the cell inner membrane. It catalyses the reaction UDP-N-acetyl-alpha-D-muramoyl-L-alanyl-gamma-D-glutamyl-meso-2,6-diaminopimeloyl-D-alanyl-D-alanine + di-trans,octa-cis-undecaprenyl phosphate = di-trans,octa-cis-undecaprenyl diphospho-N-acetyl-alpha-D-muramoyl-L-alanyl-D-glutamyl-meso-2,6-diaminopimeloyl-D-alanyl-D-alanine + UMP. The protein operates within cell wall biogenesis; peptidoglycan biosynthesis. Its function is as follows. Catalyzes the initial step of the lipid cycle reactions in the biosynthesis of the cell wall peptidoglycan: transfers peptidoglycan precursor phospho-MurNAc-pentapeptide from UDP-MurNAc-pentapeptide onto the lipid carrier undecaprenyl phosphate, yielding undecaprenyl-pyrophosphoryl-MurNAc-pentapeptide, known as lipid I. The protein is Phospho-N-acetylmuramoyl-pentapeptide-transferase of Hydrogenobaculum sp. (strain Y04AAS1).